Here is a 254-residue protein sequence, read N- to C-terminus: 2,3-bisphosphoglycerate-dependent phosphoglycerate mutase (254 aa).

Substrate is bound by residues R15–N22, T28–G29, R67, E94–Y97, K105, R121–R122, and G188–N189. Catalysis depends on H16, which acts as the Tele-phosphohistidine intermediate. E94 (proton donor/acceptor) is an active-site residue.

It belongs to the phosphoglycerate mutase family. BPG-dependent PGAM subfamily.

It catalyses the reaction (2R)-2-phosphoglycerate = (2R)-3-phosphoglycerate. It participates in carbohydrate degradation; glycolysis; pyruvate from D-glyceraldehyde 3-phosphate: step 3/5. In terms of biological role, catalyzes the interconversion of 2-phosphoglycerate and 3-phosphoglycerate. The sequence is that of 2,3-bisphosphoglycerate-dependent phosphoglycerate mutase from Corynebacterium jeikeium (strain K411).